The sequence spans 360 residues: Arginase, non-hepatic 1 (360 aa).

4 residues coordinate Mn(2+): His122, Asp145, His147, and Asp149. Substrate contacts are provided by residues 147–151, 158–160, and Asp204; these read HADIN and SGN. The Mn(2+) site is built by Asp253 and Asp255. 2 residues coordinate substrate: Thr267 and Glu298.

It belongs to the arginase family. In terms of assembly, homotrimer. Requires Mn(2+) as cofactor. As to expression, expressed at differing tadpole stages in tail, intestine, hindlimb and trunk region. Most abundant in tadpole tail.

The enzyme catalyses L-arginine + H2O = urea + L-ornithine. It functions in the pathway nitrogen metabolism; urea cycle; L-ornithine and urea from L-arginine: step 1/1. In terms of biological role, as well as its role in the urea cycle, may be involved in tissue remodeling. The polypeptide is Arginase, non-hepatic 1 (arg2-a) (Xenopus laevis (African clawed frog)).